The sequence spans 626 residues: LGDVPGTSGAIFVARPESNHPDRFGLFGAPPLEEGYVVLVGDRGLKRFPPPSEFLLSVWNRSRAARLVCCSIVLCCLCLTVFLYLSENMGQAVTTPLSLTLDHWKDVERTAHNLSVEVRKRRWVTFCSAEWPTFNVGWPRDGTFNPDIITQVKIKVFSPGPHGHPDQVPYIVTWEAIAVDPPPWVRPFVHPKPPLSLPPSAPSLPPEPPLSTPPQSSLYPALTSPLNTKPRPQVLPDSGGPLIDLLTEDPPPYRDPGPPSPDGNGDSGEVAPTEGAPDPSPMVSRLRGRKEPPVADSTTSQAFPLRLGGNGQYQYWPFSSSDLYNWKNNNPSFSEDPAKLTALIESVLLTHQPTWDDCQQLLGTLLTGEEKQRVLLEARKAVRGEDGRPTQLPNDINDAFPLERPDWDYNTQRGRNHLVHYRQLLLAGLQNAGRSPTNLAKVKGITQGPNESPSAFLERLKEAYRRYTPYDPEDPGQETNVAMSFIWQSAPDIGRKLERLEDLKSKTLGDLVREAEKIFNKRETPEEREERIRRETEEKEERRRAEDVQREKERDRRRHREMSKLLATVVSGQRQDRQGGERRRPQLDHDQCAYCKEKGHWARDCPKKPRGPRGPRPQASLLTLDD.

Residues 1–66 (LGDVPGTSGA…SVWNRSRAAR (66 aa)) are Cytoplasmic-facing. A helical membrane pass occupies residues 67–86 (LVCCSIVLCCLCLTVFLYLS). At 87 to 626 (ENMGQAVTTP…PQASLLTLDD (540 aa)) the chain is on the extracellular side. An N-linked (GlcNAc...) asparagine; by host glycan is attached at Asn113. Composition is skewed to pro residues over residues 198-212 (PPSA…PLST) and 249-261 (DPPP…PPSP). Disordered stretches follow at residues 198 to 306 (PPSA…FPLR) and 522 to 626 (RETP…TLDD). 2 stretches are compositionally biased toward basic and acidic residues: residues 522-554 (RETP…EKER) and 574-607 (RQDR…DCPK). The stretch at 526–566 (EEREERIRRETEEKEERRRAEDVQREKERDRRRHREMSKLL) forms a coiled coil. Residues 590–607 (DQCAYCKEKGHWARDCPK) form a CCHC-type zinc finger.

In terms of processing, glycosylated by host. Post-translationally, cleaved by host near the middle of the molecule, releasing the c-terminal half containing capsid and nucleoprotein domains op GAG.

The protein localises to the host cell membrane. Its function is as follows. Plays a role in viral particle release. Presumably acts by facilitating the fission of the virion bud at the cell surface. May prevent the antiviral activity of murine APOBEC3. The polypeptide is Glyco-Gag protein (Mus musculus (Mouse)).